We begin with the raw amino-acid sequence, 284 residues long: 2-dehydro-3-deoxyphosphooctonate aldolase (284 aa).

The protein belongs to the KdsA family.

Its subcellular location is the cytoplasm. The enzyme catalyses D-arabinose 5-phosphate + phosphoenolpyruvate + H2O = 3-deoxy-alpha-D-manno-2-octulosonate-8-phosphate + phosphate. Its pathway is carbohydrate biosynthesis; 3-deoxy-D-manno-octulosonate biosynthesis; 3-deoxy-D-manno-octulosonate from D-ribulose 5-phosphate: step 2/3. It functions in the pathway bacterial outer membrane biogenesis; lipopolysaccharide biosynthesis. The protein is 2-dehydro-3-deoxyphosphooctonate aldolase of Yersinia enterocolitica serotype O:8 / biotype 1B (strain NCTC 13174 / 8081).